An 88-amino-acid chain; its full sequence is UPF0250 protein Shewmr4_0986 (88 aa).

Belongs to the UPF0250 family.

The chain is UPF0250 protein Shewmr4_0986 from Shewanella sp. (strain MR-4).